Reading from the N-terminus, the 500-residue chain is Trans-cinnamate 4-monooxygenase (500 aa).

Residues 3–23 (ALLVEKVLLGLFVAAVLALVV) form a helical membrane-spanning segment. Residues 213–218 (RSRLSQ) and Ala-302 contribute to the (E)-cinnamate site. Heme is bound at residue Cys-442.

This sequence belongs to the cytochrome P450 family. The cofactor is heme. Expressed in roots and leaves.

It is found in the membrane. It catalyses the reaction (E)-cinnamate + reduced [NADPH--hemoprotein reductase] + O2 = (E)-4-coumarate + oxidized [NADPH--hemoprotein reductase] + H2O + H(+). It functions in the pathway phenylpropanoid metabolism; trans-4-coumarate biosynthesis; trans-4-coumarate from trans-cinnamate: step 1/1. Its function is as follows. Catalyzes the first oxidative step of the phenylpropanoid pathway in higher plants by transforming trans-cinnamate into p-coumarate. The compounds formed by this pathway are essential components for lignification, pollination, and defense against ultraviolet light, predators and pathogens. This chain is Trans-cinnamate 4-monooxygenase, found in Oryza sativa subsp. japonica (Rice).